The primary structure comprises 277 residues: Lectin 1 (277 aa).

An N-terminal signal peptide occupies residues 1–30 (MSFSSSNFYVILSISLTVFILLFNINKVNS). Residue asparagine 143 is glycosylated (N-linked (GlcNAc...) asparagine). Glutamate 152 and aspartate 154 together coordinate Mn(2+). 3 residues coordinate Ca(2+): aspartate 154, asparagine 158, and aspartate 161. Residues aspartate 161 and histidine 167 each coordinate Mn(2+). A glycan (N-linked (GlcNAc...) asparagine) is linked at asparagine 269.

This sequence belongs to the leguminous lectin family.

Its function is as follows. Lectin that may be involved in a cell recognition process. This is Lectin 1 (LEC1) from Medicago truncatula (Barrel medic).